Consider the following 79-residue polypeptide: Small ribosomal subunit protein bS18 (79 aa).

This sequence belongs to the bacterial ribosomal protein bS18 family. In terms of assembly, part of the 30S ribosomal subunit. Forms a tight heterodimer with protein bS6.

In terms of biological role, binds as a heterodimer with protein bS6 to the central domain of the 16S rRNA, where it helps stabilize the platform of the 30S subunit. The polypeptide is Small ribosomal subunit protein bS18 (Listeria innocua serovar 6a (strain ATCC BAA-680 / CLIP 11262)).